A 215-amino-acid polypeptide reads, in one-letter code: Cytochrome b6 (215 aa).

A helical membrane pass occupies residues I32–F52. Position 35 (C35) interacts with heme c. Residues H86 and H100 each contribute to the heme b site. The next 3 helical transmembrane spans lie at A90–F110, L116–Y136, and L186–I206. Residues H187 and H202 each coordinate heme b.

Belongs to the cytochrome b family. PetB subfamily. In terms of assembly, the 4 large subunits of the cytochrome b6-f complex are cytochrome b6, subunit IV (17 kDa polypeptide, PetD), cytochrome f and the Rieske protein, while the 4 small subunits are PetG, PetL, PetM and PetN. The complex functions as a dimer. Heme b serves as cofactor. Heme c is required as a cofactor.

The protein localises to the plastid. It localises to the chloroplast thylakoid membrane. Functionally, component of the cytochrome b6-f complex, which mediates electron transfer between photosystem II (PSII) and photosystem I (PSI), cyclic electron flow around PSI, and state transitions. This Oenothera elata subsp. hookeri (Hooker's evening primrose) protein is Cytochrome b6.